A 1104-amino-acid polypeptide reads, in one-letter code: Receptor-type guanylate cyclase gcy-15 (1104 aa).

Residues 1–431 (MEIAINRLNA…ENCGPPANNT (431 aa)) lie on the Extracellular side of the membrane. Asn-43, Asn-237, Asn-263, Asn-287, Asn-407, and Asn-429 each carry an N-linked (GlcNAc...) asparagine glycan. Residues 432–452 (FIIVISVGVAVLIGLAIAAAF) traverse the membrane as a helical segment. The Cytoplasmic portion of the chain corresponds to 453-1104 (LYKRYRYERR…QIQEKTYEFS (652 aa)). The Protein kinase domain maps to 528 to 823 (FNTGSTARAG…QIKRKLKPLT (296 aa)). Residues 534 to 542 (ARAGPFGPI) and Lys-576 contribute to the ATP site. Residues 838–871 (IEKYTDKLEKDIAERNEELEAEKAKSEALLKMML) are a coiled coil. The region spanning 894–1024 (TVFFSDCPGF…DTVNTASRME (131 aa)) is the Guanylate cyclase domain.

This sequence belongs to the adenylyl cyclase class-4/guanylyl cyclase family. Expressed bilaterally in ASG sensory neurons.

It localises to the cell membrane. The catalysed reaction is GTP = 3',5'-cyclic GMP + diphosphate. Guanylate cyclase involved in the production of the second messenger cGMP. This is Receptor-type guanylate cyclase gcy-15 from Caenorhabditis elegans.